A 152-amino-acid chain; its full sequence is Siroheme decarboxylase NirD subunit (152 aa).

Belongs to the Ahb/Nir family. In terms of assembly, probably forms a complex composed of NirD, NirL, NirG and NirH. All proteins are required for the total conversion of siroheme to didecarboxysiroheme.

The enzyme catalyses siroheme + 2 H(+) = 12,18-didecarboxysiroheme + 2 CO2. It functions in the pathway porphyrin-containing compound metabolism. Involved in heme d1 biosynthesis. Catalyzes the decarboxylation of siroheme into didecarboxysiroheme. The protein is Siroheme decarboxylase NirD subunit of Stutzerimonas stutzeri (Pseudomonas stutzeri).